The chain runs to 610 residues: Phragmoplastin DRP1A (610 aa).

Methionine 1 carries the N-acetylmethionine modification. Positions 31–300 constitute a Dynamin-type G domain; it reads WDSLPAIAVV…LERVIKSRIP (270 aa). The segment at 41-48 is G1 motif; the sequence is GGQSSGKS. 44–49 serves as a coordination point for GTP; the sequence is SSGKSS. Residues 67-69 form a G2 motif region; the sequence is VTR. Positions 142–145 are G3 motif; the sequence is DLPG. Residues 211–214 are G4 motif; the sequence is TKID. Residues 212 to 217 and 242 to 245 contribute to the GTP site; these read KIDLMD and NRSQ. The segment at 241–244 is G5 motif; that stretch reads VNRS. The 93-residue stretch at 518–610 folds into the GED domain; sequence LRRIGSNVLS…SEIDAVAWSK (93 aa).

It belongs to the TRAFAC class dynamin-like GTPase superfamily. Dynamin/Fzo/YdjA family. Forms homodimer and may homooligomerize and heterooligomerize to form the phragmoplastin complex. Interacts with AGD3/VAN3. May interact with CALS1. Binds to AHK2. Binds to SH3P2. Forms a complex made of SH3P2 and DRP1A and triggers its accumulation at the cell plate. Interacts with DRP2B at the plasma membrane and in forming clathrin-coated vesicles (CCV). Binds to PHIP1. Ubiquitous. Expressed in leaves (at protein level).

Its subcellular location is the cytoplasm. It is found in the cytoskeleton. The protein localises to the phragmoplast. It localises to the cell cortex. The protein resides in the cytoplasmic vesicle. Its subcellular location is the clathrin-coated vesicle. It is found in the cell membrane. It catalyses the reaction GTP + H2O = GDP + phosphate + H(+). Microtubule-associated force-producing protein that is targeted to at the leading edges of the forming cell plate during cytokinesis. Also plays a major role in plasma membrane maintenance and cell wall integrity with implications in vesicular trafficking, polar cell expansion, vascular formation, and other aspects of plant growth and development, including stigmatic papillae expansion. Collaboratively with DRP2B, participates in clathrin-coated vesicle formation during endocytosis. Necessary for BOR1 polar localization in low-boron (B) conditions as well as for BOR1 endocytosis and subsequent degradation under high-concentration of boron. Has a GTPase activity. Required for the sterols-dependent dynamic high lipid order observed at the cell plate of dividing cells. Together with SH3P2, converts the fused vesicles to tubular structures at the cell plate and phragmoplasts during cytokinesis. With DRP2B and PIP5K3, required for the precise coordination of polar ARAC3/ROP6 and ARAC4/ROP2 placement and subsequent root hair positioning during planar polarity formation in root hair-forming cells, probably by mediating the correct basal-to-planar polarity switching of D6PK into the polar, lipid-enriched domain. Involved in endocytosis required for cellulose deposition during cell wall formation and elongation. Interacts with plasma membrane-mimetic liposomes and induces their clustering. The protein is Phragmoplastin DRP1A of Arabidopsis thaliana (Mouse-ear cress).